The primary structure comprises 374 residues: Lipid-A-disaccharide synthase (374 aa).

Belongs to the LpxB family.

It catalyses the reaction a lipid X + a UDP-2-N,3-O-bis[(3R)-3-hydroxyacyl]-alpha-D-glucosamine = a lipid A disaccharide + UDP + H(+). It functions in the pathway bacterial outer membrane biogenesis; LPS lipid A biosynthesis. In terms of biological role, condensation of UDP-2,3-diacylglucosamine and 2,3-diacylglucosamine-1-phosphate to form lipid A disaccharide, a precursor of lipid A, a phosphorylated glycolipid that anchors the lipopolysaccharide to the outer membrane of the cell. The polypeptide is Lipid-A-disaccharide synthase (Pseudomonas fluorescens (strain ATCC BAA-477 / NRRL B-23932 / Pf-5)).